The sequence spans 206 residues: MLPPAIHFYLLPLACILMKSCLAFKNDATEILYSHVVKPVPAHPSSNSTLNQARNGGRHFSNTGLDRNTRVQVGCRELRSTKYISDGQCTSISPLKELVCAGECLPLSVLPNWIGGGYGTKYWSRRSSQEWRCVNDKTRTQRIQLQCQDGSTRTYKITVVTACKCKRYTRQHNESSHNFESMSPAKPVQHHRERKRASKSSKHSMS.

Positions 1 to 23 are cleaved as a signal peptide; the sequence is MLPPAIHFYLLPLACILMKSCLA. The N-linked (GlcNAc...) asparagine glycan is linked to Asn-47. Cystine bridges form between Cys-75–Cys-133, Cys-89–Cys-147, Cys-100–Cys-163, and Cys-104–Cys-165. Positions 75–170 constitute a CTCK domain; that stretch reads CRELRSTKYI…TACKCKRYTR (96 aa). N-linked (GlcNAc...) asparagine glycosylation is present at Asn-173. The interval 176–206 is disordered; the sequence is SHNFESMSPAKPVQHHRERKRASKSSKHSMS. Positions 188-206 are enriched in basic residues; that stretch reads VQHHRERKRASKSSKHSMS.

The protein belongs to the sclerostin family. In terms of assembly, interacts with BMP2, BMP4, BMP6 and BMP7 with high affinity.

It localises to the secreted. Functionally, directly antagonizes activity of BMP2, BMP4, BMP6 and BMP7 in a dose-dependent manner. Enhances Wnt signaling and inhibits TGF-beta signaling. May be involved in the onset of endometrial receptivity for implantation/sensitization for the decidual cell reaction. This chain is Sclerostin domain-containing protein 1 (SOSTDC1), found in Pongo abelii (Sumatran orangutan).